Here is a 1135-residue protein sequence, read N- to C-terminus: Envelopment polyprotein (1135 aa).

Residues 1 to 18 (MIMWGLLLTMILIDFGAS) form the signal peptide. The Lumenal segment spans residues 19–495 (LRNVYDMKIE…ALLTTFCFGW (477 aa)). Cystine bridges form between Cys-29–Cys-151, Cys-63–Cys-157, Cys-109–Cys-128, Cys-133–Cys-138, Cys-175–Cys-185, Cys-210–Cys-247, Cys-234–Cys-351, Cys-376–Cys-435, Cys-380–Cys-389, Cys-405–Cys-424, and Cys-452–Cys-475. N-linked (GlcNAc...) asparagine; by host glycosylation occurs at Asn-134. N-linked (GlcNAc...) asparagine; by host glycans are attached at residues Asn-235 and Asn-347. The N-linked (GlcNAc...) asparagine; by host glycan is linked to Asn-399. Residues 496–516 (ILILSITLAVLVVLKFFAAIL) form a helical membrane-spanning segment. The tract at residues 516–533 (LHNSSQENRFKIILRKIK) is binding to the ribonucleoprotein. Residues 517–627 (HNSSQENRFK…LNLFRYKSRC (111 aa)) are Cytoplasmic-facing. 2 CCHC-type zinc fingers span residues 545-565 (CEVC…NLSC) and 570-591 (CPYC…YKVC). Binding to the ribonucleoprotein stretches follow at residues 588 to 605 (YKVC…KKTI), 592 to 603 (QATHRFRDDLKK), and 611 to 625 (SPGC…RYKS). The 24-residue stretch at 611–634 (SPGCYRTLNLFRYKSRCYIFTVWV) folds into the ITAM domain. Tyr-615 and Tyr-628 each carry phosphotyrosine. A YxxL motif is present at residues 615-618 (YRTL). Residues 628 to 648 (YIFTVWVTLLIIESIMWAASA) traverse the membrane as a helical segment. The Lumenal segment spans residues 649 to 1105 (SETVLEPSWN…EWITGIFNGN (457 aa)). Disulfide bonds link Cys-735/Cys-770, Cys-739/Cys-777, Cys-751/Cys-885, Cys-765/Cys-896, Cys-780/Cys-904, Cys-806/Cys-815, Cys-823/Cys-832, and Cys-863/Cys-867. Positions 757-777 (FEYENNWGCNPADCPGIGTGC) are fusion loop. Asn-928 carries N-linked (GlcNAc...) asparagine; by host glycosylation. 5 disulfide bridges follow: Cys-970/Cys-1000, Cys-993/Cys-1045, Cys-1010/Cys-1015, Cys-1046/Cys-1051, and Cys-1085/Cys-1089. The helical transmembrane segment at 1106-1126 (WIVIVVLVFFFILSLILLSLL) threads the bilayer. Positions 1122 to 1135 (LLSLLCPIRKHKRS) are binding to the ribonucleoprotein. The Cytoplasmic segment spans residues 1127 to 1135 (CPIRKHKRS).

The protein belongs to the hantavirus envelope glycoprotein family. Homodimer. Homotetramer; forms heterotetrameric Gn-Gc spikes in the pre-fusion conformation. Interacts (via C-terminus) with the nucleoprotein. Interacts with host TUFM; this interaction contributes to the virus-induced degradation of mitochondria by autophagy, which leads to degradation of host MAVS and inhibition of type I interferon (IFN) responses. Interacts with host MAP1LC3B; this interaction contributes to the virus-induced degradation of mitochondria by autophagy, which leads to degradation of host MAVS and inhibition of type I interferon (IFN) responses. In terms of assembly, homodimer. Homotetramer; forms heterotetrameric Gn-Gc spikes in the pre-fusion conformation. Homotrimer; forms homotrimer in the post-fusion conformation at acidic pH. Interacts (via C-terminus) with the nucleoprotein. Post-translationally, envelope polyprotein precursor is quickly cleaved in vivo just after synthesis, presumably by host signal peptidase.

It is found in the virion membrane. Its subcellular location is the host cell surface. The protein resides in the host Golgi apparatus membrane. It localises to the host endoplasmic reticulum membrane. The protein localises to the host mitochondrion. In terms of biological role, forms homotetramers with glycoprotein C at the surface of the virion. Attaches the virion to host cell receptors including integrin ITGAV/ITGB3. This attachment induces virion internalization predominantly through clathrin-dependent endocytosis. Mediates the assembly and budding of infectious virus particles through its interaction with the nucleocapsid protein and the viral genome. May dysregulate normal immune and endothelial cell responses through an ITAM motif. Translocates to mitochondria, binds to host TUFM and recruits MAP1LC3B. These interactions induce mitochondrial autophagy and therefore destruction of host MAVS leading to inhibition of type I interferon (IFN) responses. Concomitant breakdown of glycoprotein N is apparently prevented by the nucleoprotein that may inhibit Gn-stimulated autophagosome-lysosome fusion. Interacts with the viral genomic RNA. Forms homotetramers with glycoprotein N at the surface of the virion. Attaches the virion to host cell receptors including integrin ITGAV/ITGB3. This attachment induces virion internalization predominantly through clathrin-dependent endocytosis. Class II fusion protein that promotes fusion of viral membrane with host endosomal membrane after endocytosis of the virion. The polypeptide is Envelopment polyprotein (GP) (Dobrava-Belgrade orthohantavirus (DOBV)).